The sequence spans 334 residues: Glycerol-3-phosphate dehydrogenase [NAD(P)+] (334 aa).

Residues Trp13, Arg33, and Lys106 each contribute to the NADPH site. The sn-glycerol 3-phosphate site is built by Lys106, Gly137, and Ser139. Ala141 is a binding site for NADPH. 5 residues coordinate sn-glycerol 3-phosphate: Lys192, Asp245, Ser255, Arg256, and Asn257. The active-site Proton acceptor is the Lys192. Arg256 provides a ligand contact to NADPH. Positions 280 and 282 each coordinate NADPH.

This sequence belongs to the NAD-dependent glycerol-3-phosphate dehydrogenase family.

It is found in the cytoplasm. It catalyses the reaction sn-glycerol 3-phosphate + NAD(+) = dihydroxyacetone phosphate + NADH + H(+). The catalysed reaction is sn-glycerol 3-phosphate + NADP(+) = dihydroxyacetone phosphate + NADPH + H(+). The protein operates within membrane lipid metabolism; glycerophospholipid metabolism. Functionally, catalyzes the reduction of the glycolytic intermediate dihydroxyacetone phosphate (DHAP) to sn-glycerol 3-phosphate (G3P), the key precursor for phospholipid synthesis. This Chlamydia abortus (strain DSM 27085 / S26/3) (Chlamydophila abortus) protein is Glycerol-3-phosphate dehydrogenase [NAD(P)+].